We begin with the raw amino-acid sequence, 364 residues long: Ribosomal RNA large subunit methyltransferase M (364 aa).

S-adenosyl-L-methionine contacts are provided by residues Ser187, 220–223 (CPGG), Asp239, Asp259, and Asp276. Lys305 (proton acceptor) is an active-site residue.

It belongs to the class I-like SAM-binding methyltransferase superfamily. RNA methyltransferase RlmE family. RlmM subfamily. Monomer.

The protein resides in the cytoplasm. It catalyses the reaction cytidine(2498) in 23S rRNA + S-adenosyl-L-methionine = 2'-O-methylcytidine(2498) in 23S rRNA + S-adenosyl-L-homocysteine + H(+). In terms of biological role, catalyzes the 2'-O-methylation at nucleotide C2498 in 23S rRNA. The sequence is that of Ribosomal RNA large subunit methyltransferase M from Aeromonas salmonicida (strain A449).